We begin with the raw amino-acid sequence, 145 residues long: Large-conductance mechanosensitive channel (145 aa).

3 consecutive transmembrane segments (helical) span residues 10 to 30, 41 to 61, and 87 to 107; these read FALKGNVMDLAVGVIIGGAFA, IMPIVAFIAGGEINFKNMFLI, and GNFITVLINFLILAFIIFMMV.

This sequence belongs to the MscL family. As to quaternary structure, homopentamer.

Its subcellular location is the cell inner membrane. In terms of biological role, channel that opens in response to stretch forces in the membrane lipid bilayer. May participate in the regulation of osmotic pressure changes within the cell. The polypeptide is Large-conductance mechanosensitive channel (Psychrobacter arcticus (strain DSM 17307 / VKM B-2377 / 273-4)).